The primary structure comprises 509 residues: Cation transporter HKT2;4 (509 aa).

The Cytoplasmic portion of the chain corresponds to 1 to 32 (MPIRLHIFVSSARHAINSSALICRFIAFHLSP). The next 2 helical transmembrane spans lie at 33–53 (LLIHLSYFLIIDVLGFVALVV) and 96–116 (VLTLLMFLGSEMFLSFLGLVL). The Cytoplasmic portion of the chain corresponds to 117-164 (ESSKQNKHDPENRRVSSVTVCEQSHLEEAIPQTPSMNSTDIKRSCHKY). 2 helical membrane passes run 165–185 (LVFVVLAYMIIILVTGSLLVF) and 237–257 (GLLLLLIGQILAGSTLLPMFL). At 258–296 (RLVIWALRGLRLAKAEEPDFMMNNSSSVGFSHLLPNLQT) the chain is on the cytoplasmic side. 2 consecutive transmembrane segments (helical) span residues 297 to 317 (IFLAAVEVAFVGMTVILFCCL) and 353 to 373 (CSLVAPAALVLFMVMMYTPSL). Residues 374–400 (TKLFSACQDHKQIGPESDDRTSKGKPF) are Cytoplasmic-facing. 2 consecutive transmembrane segments (helical) span residues 401–421 (LKTMAFSPLAFNTTVIMLVCI) and 476–496 (SFSGWWSEPGKLILVLAMLYG). At 497–509 (RLNSKDSTSARTR) the chain is on the cytoplasmic side.

It belongs to the TrkH potassium transport family. HKT (TC 2.A.38.3) subfamily. As to expression, expressed in spikelets, leaf blades, leaf sheaths, internodes, nodes, the base of stems and roots.

The protein localises to the cell membrane. The catalysed reaction is K(+)(in) = K(+)(out). It catalyses the reaction Mg(2+)(in) = Mg(2+)(out). It carries out the reaction Ca(2+)(in) = Ca(2+)(out). In terms of biological role, high-affinity potassium transporter that does not show potassium-sodium cotransport. Potassium transport seems to be independent of sodium. Mediates transport of the divalent cations magnesium and calcium in the absence of competing potassium ions. Selectivity for potassium is dominant over divalent cations, and magnesium and calcium transport may be small and may depend on competing potassium concentrations. The polypeptide is Cation transporter HKT2;4 (Oryza sativa subsp. japonica (Rice)).